Reading from the N-terminus, the 147-residue chain is Probable flagellum biosynthesis repressor protein FlbT (147 aa).

Belongs to the FlbT family.

In terms of biological role, has a post-transcriptional repressor function in flagellum biogenesis. Associates with the 5'-UTR of fljK mRNA and promotes its degradation. This Mesorhizobium japonicum (strain LMG 29417 / CECT 9101 / MAFF 303099) (Mesorhizobium loti (strain MAFF 303099)) protein is Probable flagellum biosynthesis repressor protein FlbT.